Here is a 292-residue protein sequence, read N- to C-terminus: Golgi to ER traffic protein 2 (292 aa).

Over residues 1-18 (MSELSAEEKRKLLRERRQ) the composition is skewed to basic and acidic residues. Residues 1-80 (MSELSAEEKR…TPLHDDPEVP (80 aa)) are disordered. The Cytoplasmic portion of the chain corresponds to 1–158 (MSELSAEEKR…SQYHAYEQKQ (158 aa)). Composition is skewed to polar residues over residues 29-47 (RLNN…NVTS) and 55-71 (ATTT…QSPT). A helical transmembrane segment spans residues 159-179 (WKARFLVVRWIIHTLNFVYHY). Topologically, residues 180–205 (IASGYKLSASPYAFVRAQAVDSHVRT) are lumenal. A helical transmembrane segment spans residues 206–225 (FFTAFLTVEVAVISAYFLVM). The Cytoplasmic segment spans residues 226–268 (SQPKFKDFSRENLVSRILSMASAVVPAVGRYQPLVTRALVYWN). The helical transmembrane segment at 269–289 (GASIFVGDLMLMVFYFGITSV) threads the bilayer. Over 290-292 (LGN) the chain is Lumenal.

It belongs to the GET2 family. Component of the Golgi to ER traffic (GET) complex, which is composed of GET1, GET2 and GET3. Within the complex, GET1 and GET2 form a heterotetramer which is stabilized by phosphatidylinositol binding and which binds to the GET3 homodimer.

It is found in the endoplasmic reticulum membrane. The protein resides in the golgi apparatus membrane. In terms of biological role, required for the post-translational delivery of tail-anchored (TA) proteins to the endoplasmic reticulum. Together with GET1, acts as a membrane receptor for soluble GET3, which recognizes and selectively binds the transmembrane domain of TA proteins in the cytosol. The GET complex cooperates with the HDEL receptor ERD2 to mediate the ATP-dependent retrieval of resident ER proteins that contain a C-terminal H-D-E-L retention signal from the Golgi to the ER. This is Golgi to ER traffic protein 2 from Clavispora lusitaniae (strain ATCC 42720) (Yeast).